The primary structure comprises 390 residues: Glutamyl-tRNA reductase (390 aa).

Residues 46 to 49 (TCNR), S96, 101 to 103 (EAQ), and Q107 each bind substrate. C47 serves as the catalytic Nucleophile. An NADP(+)-binding site is contributed by 176–181 (GAGEMA).

This sequence belongs to the glutamyl-tRNA reductase family. In terms of assembly, homodimer.

It carries out the reaction (S)-4-amino-5-oxopentanoate + tRNA(Glu) + NADP(+) = L-glutamyl-tRNA(Glu) + NADPH + H(+). It functions in the pathway porphyrin-containing compound metabolism; protoporphyrin-IX biosynthesis; 5-aminolevulinate from L-glutamyl-tRNA(Glu): step 1/2. In terms of biological role, catalyzes the NADPH-dependent reduction of glutamyl-tRNA(Glu) to glutamate 1-semialdehyde (GSA). This Thermus thermophilus (strain ATCC BAA-163 / DSM 7039 / HB27) protein is Glutamyl-tRNA reductase.